The following is a 169-amino-acid chain: Large ribosomal subunit protein uL10 (169 aa).

Belongs to the universal ribosomal protein uL10 family. In terms of assembly, part of the ribosomal stalk of the 50S ribosomal subunit. The N-terminus interacts with L11 and the large rRNA to form the base of the stalk. The C-terminus forms an elongated spine to which L12 dimers bind in a sequential fashion forming a multimeric L10(L12)X complex.

In terms of biological role, forms part of the ribosomal stalk, playing a central role in the interaction of the ribosome with GTP-bound translation factors. The chain is Large ribosomal subunit protein uL10 from Rickettsia typhi (strain ATCC VR-144 / Wilmington).